The chain runs to 637 residues: MGKVVGIDLGTTNSCVSVMEGGKPTVIANAEGFRTTPSVVAYTKNQDQLVGQIAKRQAVMNPDNTFYSVKRFIGRRVDEVNEESKEVSYGVEKAGSNVKVKCPVLDKQFAPEEVSAQVLRKLAEDAGKYLGETVTQAVITVPAYFNDSQRQATKDAGKIAGLEVLRIINEPTAAALAYGLDKKSNERILVFDLGGGTFDVSVLEVGDGVFEVLSTSGDTHLGGDDFDKVIVDHLAETFKSNEGIDLRQDKQALQRLTEAAEKAKIELSSATQSEINLPFITATPEGPKHLDLTLTRAKFEELAANLIDRCRIPVEQALKDAKLSSSELDEIVMVGGSTRIPAVLELVKRTTSKDPNQTVNPDEVVAVGAAIQGGVLAGEVKDILLLDVTPLSLGVETLGGVMTKMITRNTTVPTKKTETYSTAVDGQTNVEIHVLQGEREMASDNKSLGTFRLDGIPPAPRGVPQIEVTFDIDANGILSVTAKDKGSGKEQSISITGASTLSDSEVDKMVKDAEANASADKEKREKIDLKNQAETLVYQAEKQMGELGDKVEADAKAKVDEKRTKLQEAINAEDYDAMKTLLEELQQELYTVGASVYQQEGAAAGGAAPGGDAGASAASGGGDASDDVIDAEFTETK.

Phosphothreonine; by autocatalysis is present on Thr-197. A disordered region spans residues 602–637; the sequence is AAAGGAAPGGDAGASAASGGGDASDDVIDAEFTETK. Residues 603-623 show a composition bias toward gly residues; sequence AAGGAAPGGDAGASAASGGGD. The span at 624 to 637 shows a compositional bias: acidic residues; that stretch reads ASDDVIDAEFTETK.

This sequence belongs to the heat shock protein 70 family.

Functionally, acts as a chaperone. The protein is Chaperone protein dnaK2 (dnaK2) of Parasynechococcus marenigrum (strain WH8102).